Reading from the N-terminus, the 276-residue chain is Secretagogin (276 aa).

EF-hand domains follow at residues 12–47 (LDAA…LLAK), 105–140 (DNSV…LFLH), 149–184 (ELEE…QENF), 197–232 (ERKR…MMEL), and 240–276 (VDLD…KINP). Asp-118, Asp-120, Ser-122, Glu-129, Asp-162, Asn-164, Asp-166, Arg-168, Asp-173, Asp-210, Ser-212, Thr-214, Glu-221, Asp-254, Asn-256, Asp-258, Lys-260, and Glu-265 together coordinate Ca(2+).

As to expression, highly expressed in pancreas, in particular in pancreatic islets and pancreatic beta-cells. Detected in prostate, adrenal gland, small intestine, stomach and thyroid (at protein level).

The protein resides in the cytoplasm. It localises to the secreted. It is found in the cytoplasmic vesicle. The protein localises to the secretory vesicle membrane. This Rattus norvegicus (Rat) protein is Secretagogin (Scgn).